A 235-amino-acid chain; its full sequence is Large ribosomal subunit protein uL1 (235 aa).

It belongs to the universal ribosomal protein uL1 family. In terms of assembly, part of the 50S ribosomal subunit.

Binds directly to 23S rRNA. The L1 stalk is quite mobile in the ribosome, and is involved in E site tRNA release. In terms of biological role, protein L1 is also a translational repressor protein, it controls the translation of the L11 operon by binding to its mRNA. This chain is Large ribosomal subunit protein uL1, found in Mycobacterium leprae (strain Br4923).